A 532-amino-acid polypeptide reads, in one-letter code: Fatty aldehyde dehydrogenase HFD1 (532 aa).

A Phosphoserine modification is found at S111. The chain crosses the membrane as a helical span at residues 134-152 (IIAPFNFPLLLAFAPLAAA). 214-219 (GSPRVG) contacts NAD(+). Residues E236 and C273 contribute to the active site.

This sequence belongs to the aldehyde dehydrogenase family.

The protein localises to the lipid droplet. It localises to the mitochondrion outer membrane. The protein resides in the endosome membrane. Its subcellular location is the cytoplasmic granule membrane. The enzyme catalyses an aldehyde + NAD(+) + H2O = a carboxylate + NADH + 2 H(+). It carries out the reaction hexadecanoate + NADH + 2 H(+) = hexadecanal + NAD(+) + H2O. The catalysed reaction is 4-hydroxybenzaldehyde + NAD(+) + H2O = 4-hydroxybenzoate + NADH + 2 H(+). Functionally, catalyzes the oxidation of long-chain aliphatic aldehydes to fatty acids. Responsible for conversion of the sphingosine 1-phosphate (S1P) degradation product hexadecenal to hexadecenoic acid. Involved in coenzyme Q (CoQ) biosynthesis, catalyzing the last step in the tyrosine to 4-hydroxybenzoate (4-HB) pathway. Oxidizes 4-hydroxybenzaldehyde (4-Hbz) to 4-HB, the aromatic precursor for coenzyme Q. This chain is Fatty aldehyde dehydrogenase HFD1 (HFD1), found in Saccharomyces cerevisiae (strain ATCC 204508 / S288c) (Baker's yeast).